Here is a 392-residue protein sequence, read N- to C-terminus: Formate-dependent phosphoribosylglycinamide formyltransferase (392 aa).

Residues 22-23 (EL) and E82 each bind N(1)-(5-phospho-beta-D-ribosyl)glycinamide. ATP is bound by residues R114, K155, 160 to 165 (SSGKGQ), 195 to 198 (EGVV), and E203. One can recognise an ATP-grasp domain in the interval 119–308 (RLAAEELQLP…EFALHVRAFL (190 aa)). The Mg(2+) site is built by E267 and E279. N(1)-(5-phospho-beta-D-ribosyl)glycinamide is bound by residues D286, K355, and 362-363 (RR).

The protein belongs to the PurK/PurT family. In terms of assembly, homodimer.

It carries out the reaction N(1)-(5-phospho-beta-D-ribosyl)glycinamide + formate + ATP = N(2)-formyl-N(1)-(5-phospho-beta-D-ribosyl)glycinamide + ADP + phosphate + H(+). Its pathway is purine metabolism; IMP biosynthesis via de novo pathway; N(2)-formyl-N(1)-(5-phospho-D-ribosyl)glycinamide from N(1)-(5-phospho-D-ribosyl)glycinamide (formate route): step 1/1. In terms of biological role, involved in the de novo purine biosynthesis. Catalyzes the transfer of formate to 5-phospho-ribosyl-glycinamide (GAR), producing 5-phospho-ribosyl-N-formylglycinamide (FGAR). Formate is provided by PurU via hydrolysis of 10-formyl-tetrahydrofolate. The sequence is that of Formate-dependent phosphoribosylglycinamide formyltransferase from Klebsiella pneumoniae (strain 342).